The primary structure comprises 180 residues: Bifunctional protein PyrR (180 aa).

Positions 99–111 (VILVDDVLYTCRT) match the PRPP-binding motif.

This sequence belongs to the purine/pyrimidine phosphoribosyltransferase family. PyrR subfamily. Homodimer and homohexamer; in equilibrium.

The catalysed reaction is UMP + diphosphate = 5-phospho-alpha-D-ribose 1-diphosphate + uracil. Regulates transcriptional attenuation of the pyrimidine nucleotide (pyr) operon by binding in a uridine-dependent manner to specific sites on pyr mRNA. This disrupts an antiterminator hairpin in the RNA and favors formation of a downstream transcription terminator, leading to a reduced expression of downstream genes. In terms of biological role, also displays a weak uracil phosphoribosyltransferase activity which is not physiologically significant. This Clostridium botulinum (strain Eklund 17B / Type B) protein is Bifunctional protein PyrR.